Consider the following 180-residue polypeptide: Large ribosomal subunit protein uL6 (180 aa).

Belongs to the universal ribosomal protein uL6 family. Part of the 50S ribosomal subunit.

This protein binds to the 23S rRNA, and is important in its secondary structure. It is located near the subunit interface in the base of the L7/L12 stalk, and near the tRNA binding site of the peptidyltransferase center. The polypeptide is Large ribosomal subunit protein uL6 (Picrophilus torridus (strain ATCC 700027 / DSM 9790 / JCM 10055 / NBRC 100828 / KAW 2/3)).